The sequence spans 100 residues: MQLTMREQEKMMISLAAMIAQRRKDKGIKLNHPEAVALITDYVLEGAREGKTVAQLMDEARNLLTREDVMEGIAEMIPMIQVEATFTDSTKLVTVHDPIQ.

The protein belongs to the urease gamma subunit family. Heterotrimer of UreA (gamma), UreB (beta) and UreC (alpha) subunits. Three heterotrimers associate to form the active enzyme.

It is found in the cytoplasm. It carries out the reaction urea + 2 H2O + H(+) = hydrogencarbonate + 2 NH4(+). The protein operates within nitrogen metabolism; urea degradation; CO(2) and NH(3) from urea (urease route): step 1/1. Functionally, ureolysis may allow urea to be employed as a nitrogen source for growth and produces ammonia which may protect from killing at low pH. This is Urease subunit gamma from Streptococcus salivarius (strain 57.I).